Reading from the N-terminus, the 77-residue chain is Envelope glycoprotein (77 aa).

Over 1–24 (LERQKNQNWYEGWFNSSPWFTTLL) the chain is Extracellular. Residues 25–45 (STIAGPLLLLLLLLILGPCII) form a helical membrane-spanning segment. Cysteine 43 carries S-palmitoyl cysteine; by host lipidation. Topologically, residues 46-77 (NRLVQFINNRVSAVKILVLRQKYQTLDNEDNL) are cytoplasmic. The YXXL motif; contains endocytosis signal motif lies at 68 to 71 (YQTL).

In terms of assembly, the mature envelope protein (Env) consists of a trimer of SU-TM heterodimers attached by noncovalent interactions or by a labile interchain disulfide bond. Specific enzymatic cleavages in vivo yield mature proteins. Envelope glycoproteins are synthesized as an inactive precursor that is N-glycosylated and processed likely by host cell furin or by a furin-like protease in the Golgi to yield the mature SU and TM proteins. The cleavage site between SU and TM requires the minimal sequence [KR]-X-[KR]-R. The R-peptide is released from the C-terminus of the cytoplasmic tail of the TM protein upon particle formation as a result of proteolytic cleavage by the viral protease. Cleavage of this peptide is required for TM to become fusogenic. In terms of processing, the transmembrane protein is palmitoylated. Post-translationally, the R-peptide is palmitoylated.

It localises to the virion membrane. The protein localises to the host cell membrane. In terms of biological role, the surface protein (SU) attaches the virus to the host cell by binding to its receptor. This interaction triggers the refolding of the transmembrane protein (TM) and is thought to activate its fusogenic potential by unmasking its fusion peptide. Fusion occurs at the host cell plasma membrane. The transmembrane protein (TM) acts as a class I viral fusion protein. Under the current model, the protein has at least 3 conformational states: pre-fusion native state, pre-hairpin intermediate state, and post-fusion hairpin state. During viral and target cell membrane fusion, the coiled coil regions (heptad repeats) assume a trimer-of-hairpins structure, positioning the fusion peptide in close proximity to the C-terminal region of the ectodomain. The formation of this structure appears to drive apposition and subsequent fusion of viral and target cell membranes. Membranes fusion leads to delivery of the nucleocapsid into the cytoplasm. The chain is Envelope glycoprotein (env) from Woolly monkey sarcoma virus (WMSV).